We begin with the raw amino-acid sequence, 197 residues long: 7-methyl-GTP pyrophosphatase (197 aa).

Residue aspartate 79 is the Proton acceptor of the active site.

This sequence belongs to the Maf family. YceF subfamily.

It is found in the cytoplasm. It catalyses the reaction N(7)-methyl-GTP + H2O = N(7)-methyl-GMP + diphosphate + H(+). Nucleoside triphosphate pyrophosphatase that hydrolyzes 7-methyl-GTP (m(7)GTP). May have a dual role in cell division arrest and in preventing the incorporation of modified nucleotides into cellular nucleic acids. This chain is 7-methyl-GTP pyrophosphatase, found in Dictyostelium discoideum (Social amoeba).